The chain runs to 468 residues: ATP synthase subunit beta 2 (468 aa).

145–152 serves as a coordination point for ATP; it reads GGAGVGKT.

Belongs to the ATPase alpha/beta chains family. F-type ATPases have 2 components, CF(1) - the catalytic core - and CF(0) - the membrane proton channel. CF(1) has five subunits: alpha(3), beta(3), gamma(1), delta(1), epsilon(1). CF(0) has three main subunits: a(1), b(2) and c(9-12). The alpha and beta chains form an alternating ring which encloses part of the gamma chain. CF(1) is attached to CF(0) by a central stalk formed by the gamma and epsilon chains, while a peripheral stalk is formed by the delta and b chains.

It localises to the cell membrane. The catalysed reaction is ATP + H2O + 4 H(+)(in) = ADP + phosphate + 5 H(+)(out). In terms of biological role, produces ATP from ADP in the presence of a proton gradient across the membrane. The catalytic sites are hosted primarily by the beta subunits. The chain is ATP synthase subunit beta 2 from Mycoplasmopsis pulmonis (strain UAB CTIP) (Mycoplasma pulmonis).